The following is a 467-amino-acid chain: L-seryl-tRNA(Sec) selenium transferase (467 aa).

K298 is modified (N6-(pyridoxal phosphate)lysine).

It belongs to the SelA family. Pyridoxal 5'-phosphate is required as a cofactor.

The protein localises to the cytoplasm. It catalyses the reaction L-seryl-tRNA(Sec) + selenophosphate + H(+) = L-selenocysteinyl-tRNA(Sec) + phosphate. It functions in the pathway aminoacyl-tRNA biosynthesis; selenocysteinyl-tRNA(Sec) biosynthesis; selenocysteinyl-tRNA(Sec) from L-seryl-tRNA(Sec) (bacterial route): step 1/1. Converts seryl-tRNA(Sec) to selenocysteinyl-tRNA(Sec) required for selenoprotein biosynthesis. This Alkaliphilus metalliredigens (strain QYMF) protein is L-seryl-tRNA(Sec) selenium transferase.